Reading from the N-terminus, the 489-residue chain is Betaine aldehyde dehydrogenase (489 aa).

2 residues coordinate K(+): Thr26 and Asp93. Residue 150–152 (GAW) coordinates NAD(+). The active-site Charge relay system is Lys162. An NAD(+)-binding site is contributed by 176-179 (KPSE). Position 180 (Val180) interacts with K(+). 229 to 232 (GVET) serves as a coordination point for NAD(+). Leu245 is a binding site for K(+). Residue Glu251 is the Proton acceptor of the active site. 3 residues coordinate NAD(+): Gly253, Cys285, and Glu386. Catalysis depends on Cys285, which acts as the Nucleophile. Cys285 carries the cysteine sulfenic acid (-SOH) modification. 2 residues coordinate K(+): Lys456 and Gly459. Residue Glu463 is the Charge relay system of the active site.

This sequence belongs to the aldehyde dehydrogenase family. In terms of assembly, dimer of dimers. It depends on K(+) as a cofactor.

It catalyses the reaction betaine aldehyde + NAD(+) + H2O = glycine betaine + NADH + 2 H(+). Its pathway is amine and polyamine biosynthesis; betaine biosynthesis via choline pathway; betaine from betaine aldehyde: step 1/1. Its function is as follows. Involved in the biosynthesis of the osmoprotectant glycine betaine. Catalyzes the irreversible oxidation of betaine aldehyde to the corresponding acid. In Paraburkholderia phymatum (strain DSM 17167 / CIP 108236 / LMG 21445 / STM815) (Burkholderia phymatum), this protein is Betaine aldehyde dehydrogenase.